A 1159-amino-acid chain; its full sequence is Calcium-activated potassium channel subunit alpha-1 (1159 aa).

Over Glu-1–Met-24 the chain is Extracellular. The chain crosses the membrane as a helical span at residues Trp-25–Leu-45. Topologically, residues Trp-46 to Arg-116 are cytoplasmic. 3 S-palmitoyl cysteine lipidation sites follow: Cys-56, Cys-57, and Cys-59. Residues Val-117 to Ser-137 traverse the membrane as a helical segment. Topologically, residues Ser-138–Thr-152 are extracellular. Residues Leu-153 to Ala-173 form a helical membrane-spanning segment. At Ala-174–Asn-177 the chain is on the cytoplasmic side. Residues Leu-178–Val-198 traverse the membrane as a helical segment. Residues Ser-199–Leu-202 lie on the Extracellular side of the membrane. The helical; Voltage-sensor transmembrane segment at Asn-203–Ile-223 threads the bilayer. Over Leu-224–Leu-238 the chain is Cytoplasmic. Residues Val-239–Val-259 traverse the membrane as a helical segment. Residues Glu-260–Gln-273 lie on the Extracellular side of the membrane. Positions Ala-274 to Val-296 form an intramembrane region, pore-forming. The short motif at Thr-290–Tyr-293 is the Selectivity for potassium element. The Extracellular portion of the chain corresponds to Tyr-297–Leu-305. Residues Phe-306–Ile-326 form a helical membrane-spanning segment. At Glu-327 to Cys-1159 the chain is on the cytoplasmic side. An RCK N-terminal 1 domain is found at Arg-345 to Ile-487. Mg(2+) contacts are provided by Glu-377, Gln-400, and Glu-402. The tract at residues Leu-494–Phe-514 is segment S7. The segment S8 stretch occupies residues Leu-551–Ile-571. The interval Cys-615–His-619 is heme-binding motif. Residues Glu-639 to His-668 are disordered. The residue at position 643 (Thr-643) is a Phosphothreonine. 3 positions are modified to phosphoserine: Ser-645, Ser-658, and Ser-662. The segment at Val-717–Leu-737 is segment S9. The 145-residue stretch at Ser-719 to Pro-863 folds into the RCK N-terminal 2 domain. Phosphothreonine is present on Thr-850. A phosphoserine mark is found at Ser-858 and Ser-862. A Calcium bowl motif is present at residues Thr-883–Glu-905. The Ca(2+) site is built by Gln-892, Asp-895, Asp-898, and Asp-900. The segment at Phe-912–Phe-932 is segment S10. Residues Arg-1066–Ser-1091 are compositionally biased toward low complexity. Residues Arg-1066 to Arg-1124 are disordered. Basic and acidic residues predominate over residues Lys-1100–Thr-1115. Phosphoserine is present on residues Ser-1101 and Ser-1104.

This sequence belongs to the potassium channel family. Calcium-activated (TC 1.A.1.3) subfamily. KCa1.1/KCNMA1 sub-subfamily. As to quaternary structure, homotetramer; which constitutes the calcium-activated potassium channel. Interacts with beta subunits KCNMB1, KCNMB2, KCNMB3 and KCNMB4. Interacts with gamma subunits LRRC26, LRRC38, LRRC52 and LRRC55. Beta and gamma subunits are accessory, and modulate its activity. Interacts with RAB11B. Post-translationally, phosphorylated. Phosphorylation by kinases such as PKA and/or PKG. In smooth muscles, phosphorylation affects its activity. Palmitoylation by ZDHHC22 and ZDHHC23 within the intracellular linker between the S0 and S1 transmembrane domains regulates localization to the plasma membrane. Depalmitoylated by LYPLA1 and LYPLAL1, leading to retard exit from the trans-Golgi network. As to expression, expressed in all vascular and smooth muscles.

The protein localises to the cell membrane. It catalyses the reaction K(+)(in) = K(+)(out). Its activity is regulated as follows. Ethanol and carbon monoxide-bound heme increase channel activation. Heme inhibits channel activation. Potassium channel activated by both membrane depolarization or increase in cytosolic Ca(2+) that mediates export of K(+). It is also activated by the concentration of cytosolic Mg(2+). Its activation dampens the excitatory events that elevate the cytosolic Ca(2+) concentration and/or depolarize the cell membrane. It therefore contributes to repolarization of the membrane potential. Plays a key role in controlling excitability in a number of systems, such as regulation of the contraction of smooth muscle, the tuning of hair cells in the cochlea, regulation of transmitter release, and innate immunity. In smooth muscles, its activation by high level of Ca(2+), caused by ryanodine receptors in the sarcoplasmic reticulum, regulates the membrane potential. In cochlea cells, its number and kinetic properties partly determine the characteristic frequency of each hair cell and thereby helps to establish a tonotopic map. Kinetics of KCNMA1 channels are determined by alternative splicing, phosphorylation status and its combination with modulating beta subunits. Highly sensitive to both iberiotoxin (IbTx) and charybdotoxin (CTX). The protein is Calcium-activated potassium channel subunit alpha-1 (KCNMA1) of Canis lupus familiaris (Dog).